Reading from the N-terminus, the 202-residue chain is LexA repressor (202 aa).

Residues 27 to 47 constitute a DNA-binding region (H-T-H motif); that stretch reads RAEIAAELGFRSANAAEEHLR. Catalysis depends on for autocatalytic cleavage activity residues S119 and K156.

Belongs to the peptidase S24 family. Homodimer.

It carries out the reaction Hydrolysis of Ala-|-Gly bond in repressor LexA.. Its function is as follows. Represses a number of genes involved in the response to DNA damage (SOS response), including recA and lexA. In the presence of single-stranded DNA, RecA interacts with LexA causing an autocatalytic cleavage which disrupts the DNA-binding part of LexA, leading to derepression of the SOS regulon and eventually DNA repair. The polypeptide is LexA repressor (Marinobacter nauticus (strain ATCC 700491 / DSM 11845 / VT8) (Marinobacter aquaeolei)).